We begin with the raw amino-acid sequence, 274 residues long: Thiamine kinase (274 aa).

The protein belongs to the thiamine kinase family.

It carries out the reaction thiamine + ATP = thiamine phosphate + ADP + H(+). It participates in cofactor biosynthesis; thiamine diphosphate biosynthesis; thiamine phosphate from thiamine: step 1/1. In terms of biological role, catalyzes the ATP-dependent phosphorylation of thiamine to thiamine phosphate. Is involved in thiamine salvage. This is Thiamine kinase from Escherichia coli O45:K1 (strain S88 / ExPEC).